The primary structure comprises 124 residues: uncharacterized protein (124 aa).

The protein belongs to the asfivirus H124R family.

The protein resides in the virion. This is an uncharacterized protein from Ornithodoros (relapsing fever ticks).